Here is a 199-residue protein sequence, read N- to C-terminus: Fe/S biogenesis protein NfuA (199 aa).

Positions 151 and 154 each coordinate [4Fe-4S] cluster.

The protein belongs to the NfuA family. As to quaternary structure, homodimer. It depends on [4Fe-4S] cluster as a cofactor.

Its function is as follows. Involved in iron-sulfur cluster biogenesis. Binds a 4Fe-4S cluster, can transfer this cluster to apoproteins, and thereby intervenes in the maturation of Fe/S proteins. Could also act as a scaffold/chaperone for damaged Fe/S proteins. This Xanthomonas oryzae pv. oryzae (strain PXO99A) protein is Fe/S biogenesis protein NfuA.